The following is a 345-amino-acid chain: Transmembrane protein 144 homolog (345 aa).

A run of 10 helical transmembrane segments spans residues 3 to 23, 32 to 52, 61 to 81, 84 to 104, 120 to 140, 193 to 213, 233 to 253, 265 to 285, 293 to 313, and 324 to 344; these read IAVGLSACALSSVLFGSMFVP, GIFVQWIMSTAILLVGIVVYS, PLAMLGGMFWALGNATAVPIM, IGIGMGMLVWGTTNCVAGWAA, PFLNYFGLVLVVFGGFLFSQI, LAIITSLVAGVFYGFTFVPVI, VFSHYIGIFCTASALMIGYVI, LVGPSMTAGSMWGIAQASWFV, AVSFPIISMVPGVIAALWSVF, and LRLLSIAVAITLIGAICVGVS.

This sequence belongs to the TMEM144 family.

It localises to the membrane. The chain is Transmembrane protein 144 homolog from Caenorhabditis elegans.